The chain runs to 193 residues: Threonylcarbamoyl-AMP synthase (193 aa).

A YrdC-like domain is found at 14 to 193 (SRLQQRARKQ…IDLESGRVLR (180 aa)).

The protein belongs to the SUA5 family. TsaC subfamily.

It localises to the cytoplasm. The catalysed reaction is L-threonine + hydrogencarbonate + ATP = L-threonylcarbamoyladenylate + diphosphate + H2O. Functionally, required for the formation of a threonylcarbamoyl group on adenosine at position 37 (t(6)A37) in tRNAs that read codons beginning with adenine. Catalyzes the conversion of L-threonine, HCO(3)(-)/CO(2) and ATP to give threonylcarbamoyl-AMP (TC-AMP) as the acyladenylate intermediate, with the release of diphosphate. In Chromobacterium violaceum (strain ATCC 12472 / DSM 30191 / JCM 1249 / CCUG 213 / NBRC 12614 / NCIMB 9131 / NCTC 9757 / MK), this protein is Threonylcarbamoyl-AMP synthase.